The chain runs to 135 residues: Interleukin-5 (135 aa).

An N-terminal signal peptide occupies residues 1–19; it reads MRVLLQLGLLALGAVCVCA. N-linked (GlcNAc...) asparagine glycans are attached at residues Asn-48, Asn-77, and Asn-91.

Belongs to the IL-5 family. In terms of assembly, homodimer; disulfide-linked. Interacts with IL5RA. Interacts with CSF2RB.

The protein resides in the secreted. Functionally, homodimeric cytokine expressed predominantly by T-lymphocytes and NK cells that plays an important role in the survival, differentiation, and chemotaxis of eosinophils. Also acts on activated and resting B-cells to induce immunoglobulin production, growth, and differentiation. Mechanistically, exerts its biological effects through a receptor composed of IL5RA subunit and the cytokine receptor common subunit beta/CSF2RB. Binding to the receptor leads to activation of various kinases including LYN, SYK and JAK2 and thereby propagates signals through the RAS-MAPK and JAK-STAT5 pathways respectively. The protein is Interleukin-5 (IL5) of Cavia porcellus (Guinea pig).